The primary structure comprises 89 residues: Small ribosomal subunit protein uS15 (89 aa).

This sequence belongs to the universal ribosomal protein uS15 family. In terms of assembly, part of the 30S ribosomal subunit. Forms a bridge to the 50S subunit in the 70S ribosome, contacting the 23S rRNA.

One of the primary rRNA binding proteins, it binds directly to 16S rRNA where it helps nucleate assembly of the platform of the 30S subunit by binding and bridging several RNA helices of the 16S rRNA. In terms of biological role, forms an intersubunit bridge (bridge B4) with the 23S rRNA of the 50S subunit in the ribosome. The sequence is that of Small ribosomal subunit protein uS15 from Corynebacterium kroppenstedtii (strain DSM 44385 / JCM 11950 / CIP 105744 / CCUG 35717).